The sequence spans 339 residues: Heat-inducible transcription repressor HrcA (339 aa).

This sequence belongs to the HrcA family.

Its function is as follows. Negative regulator of class I heat shock genes (grpE-dnaK-dnaJ and groELS operons). Prevents heat-shock induction of these operons. This Paraburkholderia xenovorans (strain LB400) protein is Heat-inducible transcription repressor HrcA.